Consider the following 60-residue polypeptide: Large ribosomal subunit protein bL32 (60 aa).

Residues 1–28 (MAVQQNKKSRSKRDMRRSHDALTGPTLS) form a disordered region. Basic residues predominate over residues 7 to 16 (KKSRSKRDMR).

The protein belongs to the bacterial ribosomal protein bL32 family.

This chain is Large ribosomal subunit protein bL32, found in Cellvibrio japonicus (strain Ueda107) (Pseudomonas fluorescens subsp. cellulosa).